Here is a 502-residue protein sequence, read N- to C-terminus: Intracellular exo-alpha-(1-&gt;5)-L-arabinofuranosidase (502 aa).

Alpha-L-arabinofuranose contacts are provided by Glu29, Asn74, and Asn174. The active-site Proton donor/acceptor is Glu175. Tyr246, Glu294, and Gln351 together coordinate alpha-L-arabinofuranose. Residue Glu294 is the Nucleophile of the active site.

Belongs to the glycosyl hydrolase 51 family. Homohexamer; trimer of dimers.

It is found in the cytoplasm. It catalyses the reaction Hydrolysis of terminal non-reducing alpha-L-arabinofuranoside residues in alpha-L-arabinosides.. It participates in glycan metabolism; L-arabinan degradation. Its activity is regulated as follows. Strongly inhibited by Hg(2+). Functionally, involved in the degradation of arabinan and is a key enzyme in the complete degradation of the plant cell wall. Catalyzes the cleavage of terminal alpha-(1-&gt;5)-arabinofuranosyl bonds in different hemicellulosic homopolysaccharides (branched and debranched arabinans). It acts preferentially on aryl-alpha-L-arabinofuranosides, and is much less effective on aryl-beta-D-xylopyranosides. This chain is Intracellular exo-alpha-(1-&gt;5)-L-arabinofuranosidase (abfA), found in Geobacillus stearothermophilus (Bacillus stearothermophilus).